Consider the following 455-residue polypeptide: GTPase Der (455 aa).

2 consecutive EngA-type G domains span residues 4–169 and 178–353; these read PIVA…PPKH and IQMA…EQHR. Residues 10-17, 57-61, 120-123, 184-191, 231-235, and 296-299 contribute to the GTP site; these read GRPNVGKS, DTGGL, NKCE, DTAGI, and NKWD. One can recognise a KH-like domain in the interval 354-439; it reads RRVSTSVVNE…PLKLFWRGKQ (86 aa).

This sequence belongs to the TRAFAC class TrmE-Era-EngA-EngB-Septin-like GTPase superfamily. EngA (Der) GTPase family. Associates with the 50S ribosomal subunit.

Its function is as follows. GTPase that plays an essential role in the late steps of ribosome biogenesis. The sequence is that of GTPase Der from Prochlorococcus marinus (strain MIT 9313).